The primary structure comprises 515 residues: Adenine DNA glycosylase (515 aa).

Residues 1–24 are compositionally biased toward basic residues; that stretch reads MKKLQASVRSHKKQPANHKRRRTR. Residues 1–38 are disordered; the sequence is MKKLQASVRSHKKQPANHKRRRTRALSSSQAKPSSLDG. The Proton donor/acceptor role is filled by Glu-105. 4 residues coordinate [4Fe-4S] cluster: Cys-261, Cys-268, Cys-271, and Cys-277. The region spanning 335-466 is the Nudix hydrolase domain; sequence PREEYSATCV…AMKKVFRMYE (132 aa). The Nudix box motif lies at 376–398; that stretch reads VTLEPSEQHQHKALLQELQRWCG. Residues 468–494 are disordered; sequence HRQGTRKGSKRSQVCPPSSRKKPSLGQ.

This sequence belongs to the Nth/MutY family. It depends on [4Fe-4S] cluster as a cofactor. Expressed in heart, lung, liver, intestine, brain and thymus.

It is found in the nucleus. Its subcellular location is the mitochondrion. The enzyme catalyses Hydrolyzes free adenine bases from 7,8-dihydro-8-oxoguanine:adenine mismatched double-stranded DNA, leaving an apurinic site.. In terms of biological role, involved in oxidative DNA damage repair. Initiates repair of A*oxoG to C*G by removing the inappropriately paired adenine base from the DNA backbone. Possesses both adenine and 2-OH-A DNA glycosylase activities. The chain is Adenine DNA glycosylase (Mutyh) from Mus musculus (Mouse).